The sequence spans 445 residues: Exodeoxyribonuclease 7 large subunit (445 aa).

Belongs to the XseA family. In terms of assembly, heterooligomer composed of large and small subunits.

Its subcellular location is the cytoplasm. The enzyme catalyses Exonucleolytic cleavage in either 5'- to 3'- or 3'- to 5'-direction to yield nucleoside 5'-phosphates.. Bidirectionally degrades single-stranded DNA into large acid-insoluble oligonucleotides, which are then degraded further into small acid-soluble oligonucleotides. The chain is Exodeoxyribonuclease 7 large subunit from Staphylococcus aureus (strain JH1).